Here is a 362-residue protein sequence, read N- to C-terminus: Phosphoserine aminotransferase (362 aa).

L-glutamate is bound by residues Ser-9 and Arg-42. Residues 76–77 (GR), Trp-102, Thr-153, Asp-174, and Gln-197 each bind pyridoxal 5'-phosphate. Lys-198 bears the N6-(pyridoxal phosphate)lysine mark. 239-240 (NT) is a pyridoxal 5'-phosphate binding site.

Belongs to the class-V pyridoxal-phosphate-dependent aminotransferase family. SerC subfamily. As to quaternary structure, homodimer. Requires pyridoxal 5'-phosphate as cofactor.

It is found in the cytoplasm. It carries out the reaction O-phospho-L-serine + 2-oxoglutarate = 3-phosphooxypyruvate + L-glutamate. It catalyses the reaction 4-(phosphooxy)-L-threonine + 2-oxoglutarate = (R)-3-hydroxy-2-oxo-4-phosphooxybutanoate + L-glutamate. It functions in the pathway amino-acid biosynthesis; L-serine biosynthesis; L-serine from 3-phospho-D-glycerate: step 2/3. It participates in cofactor biosynthesis; pyridoxine 5'-phosphate biosynthesis; pyridoxine 5'-phosphate from D-erythrose 4-phosphate: step 3/5. Catalyzes the reversible conversion of 3-phosphohydroxypyruvate to phosphoserine and of 3-hydroxy-2-oxo-4-phosphonooxybutanoate to phosphohydroxythreonine. The protein is Phosphoserine aminotransferase of Salmonella choleraesuis (strain SC-B67).